A 316-amino-acid polypeptide reads, in one-letter code: Ubiquinol oxidase, mitochondrial (316 aa).

The transit peptide at 1 to 26 (MGVRAQPLLARSLITTTQPWILSARS) directs the protein to the mitochondrion. The chain crosses the membrane as a helical span at residues 124–144 (VHRAVVLETVAAVPGMVAGML). Glu131, Glu170, and His173 together coordinate Fe cation. The chain crosses the membrane as a helical span at residues 189 to 209 (MLVALVQTLFFNVYFLAYMLF). Positions 221, 272, and 275 each coordinate Fe cation.

Belongs to the alternative oxidase family. The cofactor is Fe cation.

It is found in the mitochondrion inner membrane. It carries out the reaction 2 a ubiquinol + O2 = 2 a ubiquinone + 2 H2O. Alternative oxidase which function may be to reoxidize reducing equivalents produced by glycolysis such as ubiquinol. In Batrachochytrium dendrobatidis (strain JAM81 / FGSC 10211) (Frog chytrid fungus), this protein is Ubiquinol oxidase, mitochondrial (AOX).